The primary structure comprises 219 residues: Endonuclease V (219 aa).

Mg(2+)-binding residues include Asp-41 and Asp-107.

This sequence belongs to the endonuclease V family. The cofactor is Mg(2+).

The protein localises to the cytoplasm. It carries out the reaction Endonucleolytic cleavage at apurinic or apyrimidinic sites to products with a 5'-phosphate.. Functionally, DNA repair enzyme involved in the repair of deaminated bases. Selectively cleaves double-stranded DNA at the second phosphodiester bond 3' to a deoxyinosine leaving behind the intact lesion on the nicked DNA. This Desulfurococcus amylolyticus (strain DSM 18924 / JCM 16383 / VKM B-2413 / 1221n) (Desulfurococcus kamchatkensis) protein is Endonuclease V.